The sequence spans 281 residues: Phosphatidylglycerol--prolipoprotein diacylglyceryl transferase (281 aa).

The next 4 membrane-spanning stretches (helical) occupy residues 29-49 (FYSL…GKMI), 64-84 (LFFY…VLFY), 100-120 (GGMS…FVSW), and 124-144 (LNWL…MFLG). Arg145 serves as a coordination point for a 1,2-diacyl-sn-glycero-3-phospho-(1'-sn-glycerol). A run of 3 helical transmembrane segments spans residues 180–200 (QLYQ…LLFW), 209–229 (GVLV…NEFF), and 248–268 (GQWL…YALT).

Belongs to the Lgt family.

The protein localises to the cell inner membrane. It catalyses the reaction L-cysteinyl-[prolipoprotein] + a 1,2-diacyl-sn-glycero-3-phospho-(1'-sn-glycerol) = an S-1,2-diacyl-sn-glyceryl-L-cysteinyl-[prolipoprotein] + sn-glycerol 1-phosphate + H(+). It participates in protein modification; lipoprotein biosynthesis (diacylglyceryl transfer). Its function is as follows. Catalyzes the transfer of the diacylglyceryl group from phosphatidylglycerol to the sulfhydryl group of the N-terminal cysteine of a prolipoprotein, the first step in the formation of mature lipoproteins. This Erythrobacter litoralis (strain HTCC2594) protein is Phosphatidylglycerol--prolipoprotein diacylglyceryl transferase.